The primary structure comprises 483 residues: Low-density lipoprotein receptor-related protein 11 (483 aa).

The first 32 residues, 1–32 (MATRGGGPGPGFRHRALRGLLLLCLWLPGSRP), serve as a signal peptide directing secretion. Residues 33–433 (GEPAAPSSGV…GGEHPAPEAG (401 aa)) lie on the Extracellular side of the membrane. Residues 85–172 (AVPDTIIRTQ…FAPLRGYRTY (88 aa)) form the MANSC domain. Residues Asn152 and Asn275 are each glycosylated (N-linked (GlcNAc...) asparagine). Residues 193-287 (PVSKAGKDVV…VTVLPRPYST (95 aa)) form the PKD domain. Positions 293 to 329 (ACSRYHFFCDSGCCIDIALACDGVRQCPDGSDEDFCQ) constitute an LDL-receptor class A domain. Cystine bridges form between Cys294–Cys306, Cys301–Cys319, and Cys313–Cys328. The interval 346-428 (AQPGAMGLNE…KSGQAGGEHP (83 aa)) is disordered. Polar residues-rich tracts occupy residues 367–376 (RATTHNQPAT) and 385–407 (HSTQKAPESQINPVQPDSNSSGK). N-linked (GlcNAc...) asparagine glycosylation occurs at Asn403. A compositionally biased stretch (basic and acidic residues) spans 408–418 (NQEEGNYDLKS). The helical transmembrane segment at 434–456 (AVLPLALGLAITVLLLLMVTCRL) threads the bilayer. The Cytoplasmic segment spans residues 457–483 (RLVKQKLKKARPITSEESDYLINGMYL). Ser474 carries the phosphoserine modification.

The protein belongs to the LDLR family.

It localises to the membrane. In Mus musculus (Mouse), this protein is Low-density lipoprotein receptor-related protein 11 (Lrp11).